The primary structure comprises 599 residues: MKKILPIIWLINLVSGSLSLEKKAPDLLGKVCAFGDFNADRNTDILVFANGTLTINYQETKLLDVLEASKFTPGTSFAISKPSLNADFVECSVGDFNGDSRLDVLVSIRDKDTEIYNHTLWTSEIEDEKEIFRPFHVAMLQQHAMAIDVSDDGWTDVLGFYPNGSMFCTGFNKEGKYNLLVNGCKHEFVAFPEKLNIYPGMPHLFVDLNSDLIADIVFMTKESDGSLFMSVWQKTKISWQFRDWVPKLTPAQYPFVGAPVVMDVDSDGELDILVPICREDECSHITQMASWSKTKLWGLVACDMQDYTVIKEPFSRVIFRVGEFSLDSFPDMVVIAQATRANTRPVIKVMDNAECTKCEKNGTRRFEIRAQENIQPKNMSLGVIKMGTFFDLLEDGSLDLLVEYEYGGQTRFGFIYCPDKGDTTFLKVQVFTGVCSDRCNPKSNEIGSSISMTGACASFSMTDGWGGSTQSVACQVPASSNRALYLPFLLYGLGRSPNFVDELNIAIPKYADRKEDWKHSLKQIVPNSRIIVLPPSDQYPHWTSRLYVTPSALIVQSLAVIALVCCMLLMVVVFLHYREKKEDRYERQQQSHRFHFDAM.

Residues 1–19 (MKKILPIIWLINLVSGSLS) form the signal peptide. The Extracellular segment spans residues 20–553 (LEKKAPDLLG…SRLYVTPSAL (534 aa)). Asn-50, Asn-117, Asn-163, Asn-361, and Asn-378 each carry an N-linked (GlcNAc...) asparagine glycan. The chain crosses the membrane as a helical span at residues 554–574 (IVQSLAVIALVCCMLLMVVVF). Residues 575–599 (LHYREKKEDRYERQQQSHRFHFDAM) are Cytoplasmic-facing.

The protein belongs to the TIP family. Expressed in all somatic gonadal cells including distal tip cells, anchor cell, uterine precursor cells and spermatheca precursor cells of the hermaphrodite. Also expressed in the pharynx, pharyngeal-intestinal valve, intestine, excretory cell and canal, seam cells, a subset of hypodermal cells, vulval precursor cells of the hermaphrodite and hook precursor cells in the male.

It localises to the apical cell membrane. It is found in the lateral cell membrane. Functionally, probable cell adhesion protein involved in gonadal cell migration. The chain is Protein linkin from Caenorhabditis elegans.